Reading from the N-terminus, the 526-residue chain is Acid-sensing ion channel 1 (526 aa).

At 1 to 49 the chain is on the cytoplasmic side; it reads MELKTEEEEVGGVQPVSIQAFASSSTLHGLAHIFSYERLSLKRALWALC. Residues 50-66 traverse the membrane as a helical segment; the sequence is FLGSLAVLLCVCTERVQ. Topologically, residues 67–425 are extracellular; it reads YYFCYHHVTK…ETIEQKKAYE (359 aa). Disulfide bonds link Cys93–Cys194, Cys172–Cys179, Cys290–Cys365, Cys308–Cys361, Cys312–Cys359, Cys321–Cys343, and Cys323–Cys335. N-linked (GlcNAc...) asparagine glycosylation is found at Asn366 and Asn393. Residues 426-456 traverse the membrane as a discontinuously helical segment; sequence IAGLLGDIGGQMGLFIGASILTVLELFDYAY. Positions 442–444 match the GAS motif; ion selectivity filter motif; that stretch reads GAS. Residues 457 to 526 lie on the Cytoplasmic side of the membrane; sequence EVIKHRLCRR…ARGTFEDFTC (70 aa). Ser477 is subject to Phosphoserine; by PKA. Ser497 is modified (phosphoserine).

Belongs to the amiloride-sensitive sodium channel (TC 1.A.6) family. ASIC1 subfamily. Homotrimer. Heterotrimer; with other ASIC proteins producing channel with different properties. Interacts with PICK1; regulates ASIC1 clustering in membranes. Interacts with STOM; alters heterotrimeric ASIC channels activity. Post-translationally, pH-gating could be regulated by serine proteases. Phosphorylation by PKA regulates interaction with PICK1 and subcellular localization. Phosphorylation by PKC may regulate the channel. As to expression, expressed in brain areas receiving strong excitatory corticofugal input. In hippocampus, expressed in the hilus of the dentate gyrus. In the cerebral cortex expressed in anterior and posterior cingulate cortex, sensory and motor cortices. In the sensory cortex strongest expression is detected in the whisker barrel field. In sensorimotor and cingulate cortex expression is elevated in layer III. Also expressed in basal ganglia, striatum, ventral pallidum, olfactory tubercle, and nucleus accumbens. Weakly expressed in thalamus with the exception of the habenula and the medial septal nuclei. In olfactory bulb, preferentially expressed in the glomerular layer, within glomeruli. Expressed in cerebellum in the molecular and granule cell layers. Strongly expressed in amygdala complex, particularly in the lateral and basolateral nuclei. Isoform 1 is more abundant in brain compared to isoform 2 (at protein level). Expressed in the nodose ganglion and dorsal root ganglion. Expressed in dendritic spine cells.

The protein resides in the cell membrane. The protein localises to the postsynaptic cell membrane. It is found in the cell projection. Its subcellular location is the dendrite. It carries out the reaction Na(+)(in) = Na(+)(out). The catalysed reaction is Ca(2+)(in) = Ca(2+)(out). It catalyses the reaction K(+)(in) = K(+)(out). The enzyme catalyses Li(+)(in) = Li(+)(out). Its activity is regulated as follows. Inhibited by the diuretic drug amiloride. The activity of the channel is sensitive to rapid decrease in osmotic pressure. Functionally, forms voltage-independent, pH-gated trimeric sodium channels that act as postsynaptic excitatory receptors in the nervous system, playing a crucial role in regulating synaptic plasticity, learning, and memory. Upon extracellular pH drop this channel elicits transient, fast activating, and completely desensitizing inward currents. Displays high selectivity for sodium ions but can also permit the permeation of other cations. Regulates more or less directly intracellular calcium concentration and CaMKII phosphorylation, and thereby the density of dendritic spines. Modulates neuronal activity in the circuits underlying innate fear. Its function is as follows. Has high selectivity for sodium ions but is also potentially permeable to other cations including potassium. Could function in cochlear mechanoelectrical transduction. This is Acid-sensing ion channel 1 from Mus musculus (Mouse).